A 152-amino-acid polypeptide reads, in one-letter code: UPF0178 protein YaiI (152 aa).

This sequence belongs to the UPF0178 family.

In Escherichia coli O17:K52:H18 (strain UMN026 / ExPEC), this protein is UPF0178 protein YaiI.